A 382-amino-acid polypeptide reads, in one-letter code: Acetyltransferase eriL (382 aa).

The next 6 membrane-spanning stretches (helical) occupy residues Leu5–Val25, Ala33–Gly53, Ile59–Asn79, Thr146–Phe166, Leu192–Val212, and Gly335–Phe355.

This sequence belongs to the wax synthase family.

The protein localises to the membrane. The catalysed reaction is cyathatriol + acetyl-CoA = 11-O-acetylcyathatriol + CoA. The enzyme catalyses cyathin A3 + acetyl-CoA = 11-O-acetylcyathin A3 + CoA. It participates in secondary metabolite biosynthesis. In terms of biological role, acetyltransferase; part of the gene cluster that mediates the biosynthesis of erinacines, cyathane-xylosides that show unique biological activities, including leishmanicidal activity, stimulating activity for nerve growth-factor synthesis, and agonistic activity toward the kappa opioid receptor. Within the pathway, eriL converts cyathatriol into 11-O-acetyl-cyathatriol. EriL is also able to acetylate cyathin A3 to produce 11-O-acetylcyathin A3. The first step of the erinacines biosynthesis pathway is catalyzed by the geranylgeranyl diphosphate (GGPP) synthase eriE via conversion of farnesyl pyrophosphate and isopentyl pyrophosphate into geranylgeranyl pyrophosphate (GGPP). GGPP is then substrate of the diterpene cyclase eriG for the production of cyatha-3,12-diene. The cytochrome P450 monooxygenase eriI then hydroxylates cyatha-3,12-diene at C-14 of the seven-membered ring to produce erinacol, which is further hydroxylated at C-15 by the cytochrome P450 monooxygenase eriC to yield cyathadiol. The cytochrome P450 monooxygenase eriA then catalyzes C-11 hydroxylation in the presence of the short chain dehydrogenase/reductase (SDR) eriH, which leads to the production of cyathatriol. The acetyltransferase eriL converts cyathatriol into 11-O-acetyl-cyathatriol. The SDR eriH catalyzes further oxidation of 11-O-acetyl-cyathatriol into 1-O-acetylcyathin A3. Finally, the glycosyl transferase eriJ tranfers xylose from UDP-xylose onto C-14 of 11-O-acetyl-cyathatriol to form eracine Q. EriJ is also able to convert 11-O-acetyl-cyathatriol to eracine Q2 by using UDP-D-glucose as cosubstrate, but at a lower rate. The chain is Acetyltransferase eriL from Hericium erinaceus (Lion's mane mushroom).